A 20-amino-acid polypeptide reads, in one-letter code: Cytochrome c oxidase subunit 5B heart, mitochondrial (20 aa).

Residues 1 to 20 are disordered; that stretch reads XXLKGIPTDEEQATGLEEYA.

This sequence belongs to the cytochrome c oxidase subunit 5B family. Component of the cytochrome c oxidase (complex IV, CIV), a multisubunit enzyme composed of 14 subunits. The complex is composed of a catalytic core of 3 subunits MT-CO1, MT-CO2 and MT-CO3, encoded in the mitochondrial DNA, and 11 supernumerary subunits COX4I, COX5A, COX5B, COX6A, COX6B, COX6C, COX7A, COX7B, COX7C, COX8 and NDUFA4, which are encoded in the nuclear genome. The complex exists as a monomer or a dimer and forms supercomplexes (SCs) in the inner mitochondrial membrane with NADH-ubiquinone oxidoreductase (complex I, CI) and ubiquinol-cytochrome c oxidoreductase (cytochrome b-c1 complex, complex III, CIII), resulting in different assemblies (supercomplex SCI(1)III(2)IV(1) and megacomplex MCI(2)III(2)IV(2)).

Its subcellular location is the mitochondrion inner membrane. It functions in the pathway energy metabolism; oxidative phosphorylation. In terms of biological role, component of the cytochrome c oxidase, the last enzyme in the mitochondrial electron transport chain which drives oxidative phosphorylation. The respiratory chain contains 3 multisubunit complexes succinate dehydrogenase (complex II, CII), ubiquinol-cytochrome c oxidoreductase (cytochrome b-c1 complex, complex III, CIII) and cytochrome c oxidase (complex IV, CIV), that cooperate to transfer electrons derived from NADH and succinate to molecular oxygen, creating an electrochemical gradient over the inner membrane that drives transmembrane transport and the ATP synthase. Cytochrome c oxidase is the component of the respiratory chain that catalyzes the reduction of oxygen to water. Electrons originating from reduced cytochrome c in the intermembrane space (IMS) are transferred via the dinuclear copper A center (CU(A)) of subunit 2 and heme A of subunit 1 to the active site in subunit 1, a binuclear center (BNC) formed by heme A3 and copper B (CU(B)). The BNC reduces molecular oxygen to 2 water molecules using 4 electrons from cytochrome c in the IMS and 4 protons from the mitochondrial matrix. The sequence is that of Cytochrome c oxidase subunit 5B heart, mitochondrial from Oncorhynchus mykiss (Rainbow trout).